A 56-amino-acid polypeptide reads, in one-letter code: Small ribosomal subunit protein uS14 (56 aa).

Ser9 is subject to Phosphoserine. Arg12 bears the Omega-N-methylarginine mark. Residues Cys21, Cys24, Cys39, and Cys42 each contribute to the Zn(2+) site. Lys48 is subject to N6-acetyllysine.

This sequence belongs to the universal ribosomal protein uS14 family. In terms of assembly, component of the 40S small ribosomal subunit. It depends on Zn(2+) as a cofactor.

The protein resides in the cytoplasm. It is found in the cytosol. Its subcellular location is the rough endoplasmic reticulum. Functionally, component of the small ribosomal subunit. The ribosome is a large ribonucleoprotein complex responsible for the synthesis of proteins in the cell. The chain is Small ribosomal subunit protein uS14 (Rps29) from Mus musculus (Mouse).